The following is a 302-amino-acid chain: Thioredoxin-like protein CDSP32, chloroplastic (302 aa).

The N-terminal 56 residues, methionine 1 to lysine 56, are a transit peptide targeting the chloroplast. Residues histidine 163–valine 298 form the Thioredoxin domain. Active-site nucleophile residues include cysteine 219 and cysteine 222. Cysteine 219 and cysteine 222 are oxidised to a cystine.

The protein belongs to the thioredoxin family. Interacts with the plastidial peroxiredoxin BAS1.

The protein resides in the plastid. It is found in the chloroplast stroma. Its function is as follows. Probable thiol-disulfide oxidoreductase involved in resistance to oxidative stress. May participate in the reduction of alkyl hydroperoxides derived from oxidative stress by acting as a physiological electron donor to the BAS1 peroxiredoxin. May regenerate methionine sulfoxide reductase B1 (MSRB1) activity through sulfenic acid reduction. This is Thioredoxin-like protein CDSP32, chloroplastic (CDSP32) from Arabidopsis thaliana (Mouse-ear cress).